A 131-amino-acid chain; its full sequence is Small ribosomal subunit protein uS8 (131 aa).

It belongs to the universal ribosomal protein uS8 family. As to quaternary structure, part of the 30S ribosomal subunit. Contacts proteins S5 and S12.

One of the primary rRNA binding proteins, it binds directly to 16S rRNA central domain where it helps coordinate assembly of the platform of the 30S subunit. In Chlorobium luteolum (strain DSM 273 / BCRC 81028 / 2530) (Pelodictyon luteolum), this protein is Small ribosomal subunit protein uS8.